The following is a 562-amino-acid chain: NAD-dependent malic enzyme (562 aa).

Tyr-101 acts as the Proton donor in catalysis. Residue Arg-154 participates in NAD(+) binding. Lys-172 acts as the Proton acceptor in catalysis. 3 residues coordinate a divalent metal cation: Glu-243, Asp-244, and Asp-267. 2 residues coordinate NAD(+): Asp-267 and Asn-415.

This sequence belongs to the malic enzymes family. In terms of assembly, homotetramer. Mg(2+) is required as a cofactor. It depends on Mn(2+) as a cofactor.

The catalysed reaction is (S)-malate + NAD(+) = pyruvate + CO2 + NADH. The enzyme catalyses oxaloacetate + H(+) = pyruvate + CO2. This is NAD-dependent malic enzyme from Aliivibrio fischeri (strain ATCC 700601 / ES114) (Vibrio fischeri).